We begin with the raw amino-acid sequence, 375 residues long: Alanine racemase (375 aa).

The active-site Proton acceptor; specific for D-alanine is the K41. At K41 the chain carries N6-(pyridoxal phosphate)lysine. R141 lines the substrate pocket. Y270 (proton acceptor; specific for L-alanine) is an active-site residue. M317 is a binding site for substrate.

This sequence belongs to the alanine racemase family. Pyridoxal 5'-phosphate is required as a cofactor.

The enzyme catalyses L-alanine = D-alanine. The protein operates within amino-acid biosynthesis; D-alanine biosynthesis; D-alanine from L-alanine: step 1/1. Its function is as follows. Catalyzes the interconversion of L-alanine and D-alanine. May also act on other amino acids. The chain is Alanine racemase (alr) from Lactiplantibacillus plantarum (strain ATCC BAA-793 / NCIMB 8826 / WCFS1) (Lactobacillus plantarum).